The sequence spans 93 residues: Large ribosomal subunit protein uL23 (93 aa).

The protein belongs to the universal ribosomal protein uL23 family. Part of the 50S ribosomal subunit. Contacts protein L29, and trigger factor when it is bound to the ribosome.

Its function is as follows. One of the early assembly proteins it binds 23S rRNA. One of the proteins that surrounds the polypeptide exit tunnel on the outside of the ribosome. Forms the main docking site for trigger factor binding to the ribosome. This is Large ribosomal subunit protein uL23 from Sulfurovum sp. (strain NBC37-1).